The primary structure comprises 529 residues: Cytochrome P450 monooxygenase okaD (529 aa).

Residues 13-35 (LPAQHLLASLALVGALLSVGYLL) traverse the membrane as a helical segment. A heme-binding site is contributed by C435.

The protein belongs to the cytochrome P450 family. Requires heme as cofactor.

The protein localises to the membrane. It catalyses the reaction okaramine C + 2 reduced [NADPH--hemoprotein reductase] + 2 O2 = okaramine A + 2 oxidized [NADPH--hemoprotein reductase] + 4 H2O + 2 H(+). Its pathway is alkaloid biosynthesis. In terms of biological role, cytochrome P450 monooxygenase; part of the gene cluster that mediates the biosynthesis of okaramine B, a prenylated indole alkaloid that possesses an unusual octacyclic ring system, including a four-membered azetidine ring and an eight-membered azocine ring, and that exhibits insecticidal activity against silkworm larvae. Within the pathway, okaD likely catalyzes a key step in forming the eight-membered ring of okaramine A using as substrate okaramine C. The biosynthesis begins with the NRPS okaA that condenses two tryptophan molecules into cyclo(L-Trp-L-Trp). Prenylation by the prenyltransferase okaC then leads to the formation of cyclo(N8-(alpha,alpha-dimethylallyl)-L-Trp-6a-(alpha,alpha-dime-thylallyl)-L-Trp). This is followed by indole 2,3-epoxidation by the FAD-dependent monooxygenase okaB to facilitate the formation of the hexahydropyrrolo[2,3-b]indole (HPI) moiety of okaramine C. The cytochrome P450 monooxygenase okaD then likely catalyzes formation of the eight-membered ring of okaramine A. The dioxygenase okaE further forms the unusual 2-dimethyl-3-methyl-azetidine ring to yield 12-deshydroxyl okaramine E, as well as the hydroxylation of 12-deshydroxyl okaramine E to produce okaramine E. The cytochrome P450 monoxygenase okaG converts 12-deshydroxyl okaramine E into 3-desmethyl okaramine B which is further methylated by the methyltransferase okaF into okaramine B. In a shunt pathway, okaG and okaF together are also able to convert okaramine E into okaramine D. Okaramine H is produced by nonenzymatic conversion from okaramine A. The chain is Cytochrome P450 monooxygenase okaD from Penicillium ochrochloron.